We begin with the raw amino-acid sequence, 450 residues long: Probable transporter MCH1 (450 aa).

12 helical membrane-spanning segments follow: residues 32-52 (AFLV…ISLY), 69-89 (VLFS…GLLS), 96-116 (MLSW…AWVF), 127-147 (VLCF…ALFT), 157-177 (LCSI…GSQL), 199-219 (LAVA…IVTM), 255-275 (PAAY…EMFL), 290-309 (VLPE…GLII), 320-340 (MSVQ…VVLA), 355-375 (LSGA…LAVW), 378-398 (AVFG…SILF), and 423-443 (VFWS…LMYL).

It belongs to the major facilitator superfamily.

It localises to the vacuole membrane. In terms of biological role, probable transporter. In Eremothecium gossypii (strain ATCC 10895 / CBS 109.51 / FGSC 9923 / NRRL Y-1056) (Yeast), this protein is Probable transporter MCH1 (MCH1).